The following is a 191-amino-acid chain: Peptidyl-tRNA hydrolase (191 aa).

Tyrosine 16 serves as a coordination point for tRNA. The active-site Proton acceptor is the histidine 21. The tRNA site is built by phenylalanine 66, asparagine 68, and asparagine 114.

The protein belongs to the PTH family. In terms of assembly, monomer.

It localises to the cytoplasm. The enzyme catalyses an N-acyl-L-alpha-aminoacyl-tRNA + H2O = an N-acyl-L-amino acid + a tRNA + H(+). Hydrolyzes ribosome-free peptidyl-tRNAs (with 1 or more amino acids incorporated), which drop off the ribosome during protein synthesis, or as a result of ribosome stalling. Functionally, catalyzes the release of premature peptidyl moieties from peptidyl-tRNA molecules trapped in stalled 50S ribosomal subunits, and thus maintains levels of free tRNAs and 50S ribosomes. The protein is Peptidyl-tRNA hydrolase of Geotalea daltonii (strain DSM 22248 / JCM 15807 / FRC-32) (Geobacter daltonii).